Reading from the N-terminus, the 967-residue chain is Translation initiation factor IF-2 (967 aa).

2 disordered regions span residues 201-320 (KPIV…PGFV) and 349-382 (LQGK…ELEA). Polar residues predominate over residues 233–248 (TGPTFSGQTIDLSQFN). The segment covering 256-272 (PNKGGAKPAGAGNNNNN) has biased composition (low complexity). The segment covering 354 to 363 (NKSKAAKYRR) has biased composition (basic residues). Residues 364 to 382 (DKRDTHRQKSDDEQRELEA) show a composition bias toward basic and acidic residues. The 171-residue stretch at 465-635 (HRAPIVTVMG…LLEAEVLDLK (171 aa)) folds into the tr-type G domain. The segment at 474–481 (GHVDHGKT) is G1. Residue 474-481 (GHVDHGKT) participates in GTP binding. Residues 499–503 (GITQH) form a G2 region. The segment at 521–524 (DTPG) is G3. GTP contacts are provided by residues 521–525 (DTPGH) and 575–578 (NKVD). Positions 575–578 (NKVD) are G4. The tract at residues 611–613 (SAK) is G5.

This sequence belongs to the TRAFAC class translation factor GTPase superfamily. Classic translation factor GTPase family. IF-2 subfamily.

It is found in the cytoplasm. Functionally, one of the essential components for the initiation of protein synthesis. Protects formylmethionyl-tRNA from spontaneous hydrolysis and promotes its binding to the 30S ribosomal subunits. Also involved in the hydrolysis of GTP during the formation of the 70S ribosomal complex. This chain is Translation initiation factor IF-2, found in Flavobacterium psychrophilum (strain ATCC 49511 / DSM 21280 / CIP 103535 / JIP02/86).